We begin with the raw amino-acid sequence, 79 residues long: Putative transmembrane protein ORF17 (79 aa).

The next 2 helical transmembrane spans lie at 8-28 and 50-70; these read LMIYFFLPVSYLLVGFVIMYY and VFVMILLIWPFFLFLVVTTTI.

The protein resides in the host membrane. This chain is Putative transmembrane protein ORF17, found in Haloarcula hispanica (His1V).